A 704-amino-acid polypeptide reads, in one-letter code: Meprin A subunit beta (704 aa).

The N-terminal stretch at 1–20 is a signal peptide; it reads MDARHQPWFLVFATFLLVSG. A propeptide spanning residues 21 to 64 is cleaved from the precursor; sequence LPAPEKFVKDIDGGIDQDIFDINQGLGLDLFEGDIKLEANGKNS. The Extracellular segment spans residues 21–654; it reads LPAPEKFVKD…RCEKRGSTRD (634 aa). Residues 63-257 form the Peptidase M12A domain; the sequence is NSIIGDHKRW…LKLNQLYNCT (195 aa). 3 cysteine pairs are disulfide-bonded: Cys-104-Cys-256, Cys-125-Cys-145, and Cys-266-Cys-428. Zn(2+) is bound at residue His-153. The active site involves Glu-154. Positions 157 and 163 each coordinate Zn(2+). N-linked (GlcNAc...) asparagine glycans are attached at residues Asn-193, Asn-219, Asn-255, Asn-316, Asn-422, Asn-437, Asn-529, Asn-548, and Asn-593. One can recognise an MAM domain in the interval 261 to 430; that stretch reads SFMDSCDFEL…INLSETRCPH (170 aa). One can recognise an MATH domain in the interval 431–586; sequence HIWHIQNFTQ…GDDIYILLTV (156 aa). The EGF-like domain maps to 607–647; the sequence is VHNACSEVVCQNGGICVVQDGRAECKCPAGEDWWYMGKRCE. Disulfide bonds link Cys-611/Cys-622, Cys-616/Cys-631, and Cys-633/Cys-646. The chain crosses the membrane as a helical span at residues 655–678; that stretch reads TVIIAVSSTVTVFAVMLIITLVSV. At 679 to 704 the chain is on the cytoplasmic side; it reads YCTRRKYRKKARANTAAMTLENQHAF. The residue at position 697 (Thr-697) is a Phosphothreonine.

In terms of assembly, homotetramer consisting of disulfide-linked beta subunits, or heterotetramer of two alpha and two beta subunits formed by non-covalent association of two disulfide-linked heterodimers. Interacts with MBL2 through its carbohydrate moiety. This interaction may inhibit its catalytic activity. Interacts with TSPAN8. The cofactor is Zn(2+). Proteolytically activated by trypsin in the intestinal lumen and kallikrein-related peptidases in other tissues. In terms of processing, N-glycosylated; contains high mannose and/or complex biantennary structures. Post-translationally, phosphorylated by PKC at multiple sites of its cytoplasmic part. Phosphorylation dcreases activity at the cell surface, leading to diminished substrate cleavage. In terms of tissue distribution, isoform 1 is expressed in kidney, intestinal brush borders, and salivary ducts. Isoform 2 has been found in carcinoma cells.

The protein resides in the cell membrane. It is found in the secreted. The catalysed reaction is Hydrolysis of proteins, including azocasein, and peptides. Hydrolysis of 5-His-|-Leu-6, 6-Leu-|-Cys-7, 14-Ala-|-Leu-15 and 19-Cys-|-Gly-20 bonds in insulin B chain.. Strongly inhibited by fetuin-A/AHSG. Inhibited by cysteine and by the metal ion chelators EDTA and 1,10-phenanthroline. Not inhibited by 3,4-dichloroisocourmarin, soybean trypsin inhibitor, or the cysteine proteinase inhibitors iodoacetic acid and E-64. In terms of biological role, membrane metallopeptidase that sheds many membrane-bound proteins. Exhibits a strong preference for acidic amino acids at the P1' position. Known substrates include: FGF19, VGFA, IL1B, IL18, procollagen I and III, E-cadherin, KLK7, gastrin, ADAM10, tenascin-C. The presence of several pro-inflammatory cytokine among substrates implicate MEP1B in inflammation. It is also involved in tissue remodeling due to its capability to degrade extracellular matrix components. The polypeptide is Meprin A subunit beta (Mep1b) (Mus musculus (Mouse)).